Reading from the N-terminus, the 99-residue chain is UPF0751 protein BAMEG_A0107 (99 aa).

Belongs to the UPF0751 family.

The sequence is that of UPF0751 protein BAMEG_A0107 from Bacillus anthracis (strain CDC 684 / NRRL 3495).